Consider the following 510-residue polypeptide: Chromosomal replication initiator protein DnaA (510 aa).

Positions 1-107 are domain I, interacts with DnaA modulators; sequence MTNDPGSGFA…VRIAPPPADD (107 aa). Residues 107–169 form a domain II region; sequence DDDDSVAAAV…ADTSASAGGT (63 aa). Residues 119–168 are disordered; sequence PGLEASPETSQEVSDEIDDFGENAPNSRQSWPTHFKKRSTDADTSASAGG. Positions 170–386 are domain III, AAA+ region; the sequence is SLNRRYTFDT…GALIRVTAFA (217 aa). G214, G216, K217, and T218 together coordinate ATP. Residues 387-510 form a domain IV, binds dsDNA region; the sequence is SLNKTPIDKA…TTRIRQRSKR (124 aa).

It belongs to the DnaA family. Oligomerizes as a right-handed, spiral filament on DNA at oriC.

It localises to the cytoplasm. Plays an essential role in the initiation and regulation of chromosomal replication. ATP-DnaA binds to the origin of replication (oriC) to initiate formation of the DNA replication initiation complex once per cell cycle. Binds the DnaA box (a 9 base pair repeat at the origin) and separates the double-stranded (ds)DNA. Forms a right-handed helical filament on oriC DNA; dsDNA binds to the exterior of the filament while single-stranded (ss)DNA is stabiized in the filament's interior. The ATP-DnaA-oriC complex binds and stabilizes one strand of the AT-rich DNA unwinding element (DUE), permitting loading of DNA polymerase. After initiation quickly degrades to an ADP-DnaA complex that is not apt for DNA replication. Binds acidic phospholipids. In Mycobacterium marinum (strain ATCC BAA-535 / M), this protein is Chromosomal replication initiator protein DnaA.